Reading from the N-terminus, the 424-residue chain is Serine hydroxymethyltransferase (424 aa).

(6S)-5,6,7,8-tetrahydrofolate is bound by residues Leu-113 and 117-119; that span reads GHL. Lys-222 is modified (N6-(pyridoxal phosphate)lysine). 361–363 provides a ligand contact to (6S)-5,6,7,8-tetrahydrofolate; sequence SPF.

Belongs to the SHMT family. In terms of assembly, homodimer. The cofactor is pyridoxal 5'-phosphate.

It is found in the cytoplasm. It catalyses the reaction (6R)-5,10-methylene-5,6,7,8-tetrahydrofolate + glycine + H2O = (6S)-5,6,7,8-tetrahydrofolate + L-serine. The protein operates within one-carbon metabolism; tetrahydrofolate interconversion. It functions in the pathway amino-acid biosynthesis; glycine biosynthesis; glycine from L-serine: step 1/1. Catalyzes the reversible interconversion of serine and glycine with tetrahydrofolate (THF) serving as the one-carbon carrier. This reaction serves as the major source of one-carbon groups required for the biosynthesis of purines, thymidylate, methionine, and other important biomolecules. Also exhibits THF-independent aldolase activity toward beta-hydroxyamino acids, producing glycine and aldehydes, via a retro-aldol mechanism. In Flavobacterium psychrophilum (strain ATCC 49511 / DSM 21280 / CIP 103535 / JIP02/86), this protein is Serine hydroxymethyltransferase.